Here is a 195-residue protein sequence, read N- to C-terminus: dITP/XTP pyrophosphatase (195 aa).

A substrate-binding site is contributed by 8–13 (SNNQGK). 2 residues coordinate Mg(2+): Glu39 and Asp68. The Proton acceptor role is filled by Asp68. Residues Ser69, 149–152 (FGYD), Lys172, and 177–178 (HR) contribute to the substrate site.

Belongs to the HAM1 NTPase family. In terms of assembly, homodimer. The cofactor is Mg(2+).

The catalysed reaction is XTP + H2O = XMP + diphosphate + H(+). It carries out the reaction dITP + H2O = dIMP + diphosphate + H(+). It catalyses the reaction ITP + H2O = IMP + diphosphate + H(+). In terms of biological role, pyrophosphatase that catalyzes the hydrolysis of nucleoside triphosphates to their monophosphate derivatives, with a high preference for the non-canonical purine nucleotides XTP (xanthosine triphosphate), dITP (deoxyinosine triphosphate) and ITP. Seems to function as a house-cleaning enzyme that removes non-canonical purine nucleotides from the nucleotide pool, thus preventing their incorporation into DNA/RNA and avoiding chromosomal lesions. In Staphylococcus aureus (strain MRSA252), this protein is dITP/XTP pyrophosphatase.